The chain runs to 151 residues: UPF0178 protein YaiI (151 aa).

This sequence belongs to the UPF0178 family.

This chain is UPF0178 protein YaiI, found in Salmonella paratyphi C (strain RKS4594).